Here is a 296-residue protein sequence, read N- to C-terminus: 4-hydroxy-tetrahydrodipicolinate synthase (296 aa).

Thr-49 is a pyruvate binding site. Tyr-137 functions as the Proton donor/acceptor in the catalytic mechanism. The active-site Schiff-base intermediate with substrate is the Lys-165. Pyruvate is bound at residue Ile-207.

Belongs to the DapA family. Homotetramer; dimer of dimers.

It localises to the cytoplasm. The catalysed reaction is L-aspartate 4-semialdehyde + pyruvate = (2S,4S)-4-hydroxy-2,3,4,5-tetrahydrodipicolinate + H2O + H(+). It participates in amino-acid biosynthesis; L-lysine biosynthesis via DAP pathway; (S)-tetrahydrodipicolinate from L-aspartate: step 3/4. Functionally, catalyzes the condensation of (S)-aspartate-beta-semialdehyde [(S)-ASA] and pyruvate to 4-hydroxy-tetrahydrodipicolinate (HTPA). This Rhodopseudomonas palustris (strain BisA53) protein is 4-hydroxy-tetrahydrodipicolinate synthase.